Here is a 354-residue protein sequence, read N- to C-terminus: Ferrochelatase (354 aa).

His204 and Glu306 together coordinate Fe cation.

It belongs to the ferrochelatase family.

Its subcellular location is the cytoplasm. The catalysed reaction is heme b + 2 H(+) = protoporphyrin IX + Fe(2+). Its pathway is porphyrin-containing compound metabolism; protoheme biosynthesis; protoheme from protoporphyrin-IX: step 1/1. Functionally, catalyzes the ferrous insertion into protoporphyrin IX. The sequence is that of Ferrochelatase from Coxiella burnetii (strain RSA 493 / Nine Mile phase I).